The chain runs to 427 residues: MSVSFENKETNRGVLTFTISQDQIKPELDRVFKSVKKSLNVPGFRKGHLPRPIFDQKFGEEALYQDAMNALLPNAYEAAVKEAGLEVVAQPKIDVTSMEKGQDWVITAEVVTKPEVKLGDYKNLEVSVDVEKEVTDADVEERIERERNNLAELVIKEAAAENGDTVVIDFVGSIDGVEFDGGKGENFSLGLGSGQFIPGFEDQLVGHSAGETVDVIVTFPEDYQAEDLAGKEAKFVTTIHEVKAKEVPALDDELAKDIDEEVETLADLKEKYRKELAAAKEETYKDAVEGAAIDTAVENAEIVELPEEMIHEEVHRSVNEFLGNLQRQGINPDMYFQITGTTQEDLHNQYQAEAESRTKTNLVIEAVAKAEGFDASEEEIQKEVEQLAADYNMEVAQVQNLLSADMLKHDITIKKAVELITSTATVK.

One can recognise a PPIase FKBP-type domain in the interval 163 to 248 (GDTVVIDFVG…IHEVKAKEVP (86 aa)).

The protein belongs to the FKBP-type PPIase family. Tig subfamily.

It is found in the cytoplasm. It catalyses the reaction [protein]-peptidylproline (omega=180) = [protein]-peptidylproline (omega=0). In terms of biological role, involved in protein export. Acts as a chaperone by maintaining the newly synthesized protein in an open conformation. Functions as a peptidyl-prolyl cis-trans isomerase. The chain is Trigger factor from Streptococcus pneumoniae serotype 2 (strain D39 / NCTC 7466).